A 317-amino-acid chain; its full sequence is Glycerol-3-phosphate dehydrogenase [NAD(P)+] (317 aa).

NADPH is bound by residues tryptophan 20, arginine 40, arginine 41, and lysine 88. Sn-glycerol 3-phosphate is bound by residues lysine 88 and glycine 116. Serine 120 is an NADPH binding site. The sn-glycerol 3-phosphate site is built by lysine 171, aspartate 224, serine 234, arginine 235, and asparagine 236. The active-site Proton acceptor is the lysine 171. An NADPH-binding site is contributed by arginine 235. Glutamate 261 provides a ligand contact to NADPH.

The protein belongs to the NAD-dependent glycerol-3-phosphate dehydrogenase family.

It is found in the cytoplasm. It catalyses the reaction sn-glycerol 3-phosphate + NAD(+) = dihydroxyacetone phosphate + NADH + H(+). It carries out the reaction sn-glycerol 3-phosphate + NADP(+) = dihydroxyacetone phosphate + NADPH + H(+). Its pathway is membrane lipid metabolism; glycerophospholipid metabolism. Its function is as follows. Catalyzes the reduction of the glycolytic intermediate dihydroxyacetone phosphate (DHAP) to sn-glycerol 3-phosphate (G3P), the key precursor for phospholipid synthesis. This chain is Glycerol-3-phosphate dehydrogenase [NAD(P)+], found in Synechocystis sp. (strain ATCC 27184 / PCC 6803 / Kazusa).